A 429-amino-acid polypeptide reads, in one-letter code: Serine hydroxymethyltransferase (429 aa).

A (6S)-5,6,7,8-tetrahydrofolate-binding site is contributed by 120-122 (GHI). Position 226 is an N6-(pyridoxal phosphate)lysine (Lys226).

Belongs to the SHMT family. In terms of assembly, homodimer. Pyridoxal 5'-phosphate serves as cofactor.

The protein localises to the cytoplasm. It functions in the pathway amino-acid biosynthesis; glycine biosynthesis; glycine from L-serine: step 1/1. In terms of biological role, catalyzes the reversible interconversion of serine and glycine with a modified folate serving as the one-carbon carrier. Also exhibits a pteridine-independent aldolase activity toward beta-hydroxyamino acids, producing glycine and aldehydes, via a retro-aldol mechanism. In Pyrobaculum arsenaticum (strain DSM 13514 / JCM 11321 / PZ6), this protein is Serine hydroxymethyltransferase.